The sequence spans 278 residues: Nucleotide-binding protein Tmel_1373 (278 aa).

10–17 contributes to the ATP binding site; the sequence is GLSGAGKS. 58-61 serves as a coordination point for GTP; the sequence is DSRS.

It belongs to the RapZ-like family.

Functionally, displays ATPase and GTPase activities. This is Nucleotide-binding protein Tmel_1373 from Thermosipho melanesiensis (strain DSM 12029 / CIP 104789 / BI429).